We begin with the raw amino-acid sequence, 389 residues long: Sterol methyltransferase-like 2 (389 aa).

Residues 25-45 traverse the membrane as a helical segment; sequence LSWKGAVGLVAATGIGYVLII.

It belongs to the class I-like SAM-binding methyltransferase superfamily. Erg6/SMT family.

The protein localises to the microsome membrane. Its function is as follows. Unable to convert squalene, botryococcene, cycloartenol, zymosterol or lanosterol to mono-, di-, tri- or tetramethylated derivatives. In Botryococcus braunii (Green alga), this protein is Sterol methyltransferase-like 2 (SMT-2).